Consider the following 140-residue polypeptide: MSRTKQTASKALGGKAPRKGISAKSIPSSGCSPAMPKRTRFKAGALALKEIRKYQKSTDLLIRKRPFQRMVRDLCKGREGVRFQASAIVAFQEAVENFLTSLMEDAYRCVLHAKRVTLMPKDICLVYKIKYANILYAALD.

The tract at residues 1–36 (MSRTKQTASKALGGKAPRKGISAKSIPSSGCSPAMP) is disordered. An N6,N6,N6-trimethyllysine; alternate modification is found at K5. K5 carries the post-translational modification N6,N6-dimethyllysine; alternate. Residues K5 and K10 each carry the N6-methyllysine; alternate modification. Residues K10, K15, K19, and K24 each carry the N6-acetyllysine; alternate modification. K15 carries the post-translational modification N6,N6-dimethyllysine; alternate. 2 positions are modified to N6-methyllysine; alternate: K19 and K24. N6-acetyllysine occurs at positions 56 and 64.

The protein belongs to the histone H3 family. In terms of assembly, the nucleosome is a histone octamer containing two molecules each of H2A, H2B, H3 and H4 assembled in one H3-H4 heterotetramer and two H2A-H2B heterodimers. The octamer wraps approximately 147 bp of DNA. In terms of processing, mono-, di- and trimethylated to form H3K4me1/2/3. H3K4me activates gene expression by regulating transcription elongation and plays a role in telomere length maintenance. H3K4me enrichment correlates with transcription levels, and occurs in a 5' to 3' gradient with H3K4me3 enrichment at the 5'-end of genes, shifting to H3K4me2 and then H3K4me1. Post-translationally, acetylation of histone H3 leads to transcriptional activation.

It is found in the nucleus. The protein resides in the chromosome. In terms of biological role, core component of nucleosome. Nucleosomes wrap and compact DNA into chromatin, limiting DNA accessibility to the cellular machineries which require DNA as a template. Histones thereby play a central role in transcription regulation, DNA repair, DNA replication and chromosomal stability. DNA accessibility is regulated via a complex set of post-translational modifications of histones, also called histone code, and nucleosome remodeling. This is Histone H3-like protein from Encephalitozoon cuniculi (strain GB-M1) (Microsporidian parasite).